The sequence spans 333 residues: Probable tRNA pseudouridine synthase B (333 aa).

The active-site Nucleophile is D66. In terms of domain architecture, PUA spans 233-308 (LKKIIVKDSA…EVVEITRVIM (76 aa)).

Belongs to the pseudouridine synthase TruB family. Type 2 subfamily.

It carries out the reaction uridine(55) in tRNA = pseudouridine(55) in tRNA. Its function is as follows. Could be responsible for synthesis of pseudouridine from uracil-55 in the psi GC loop of transfer RNAs. This is Probable tRNA pseudouridine synthase B from Methanococcus maripaludis (strain C7 / ATCC BAA-1331).